The primary structure comprises 302 residues: Acetyl-coenzyme A carboxylase carboxyl transferase subunit beta (302 aa).

The CoA carboxyltransferase N-terminal domain maps to valine 25–serine 294. Zn(2+) is bound by residues cysteine 29, cysteine 32, cysteine 48, and cysteine 51. A C4-type zinc finger spans residues cysteine 29–cysteine 51. Positions asparagine 281–alanine 302 are disordered.

This sequence belongs to the AccD/PCCB family. In terms of assembly, acetyl-CoA carboxylase is a heterohexamer composed of biotin carboxyl carrier protein (AccB), biotin carboxylase (AccC) and two subunits each of ACCase subunit alpha (AccA) and ACCase subunit beta (AccD). The cofactor is Zn(2+).

The protein localises to the cytoplasm. The enzyme catalyses N(6)-carboxybiotinyl-L-lysyl-[protein] + acetyl-CoA = N(6)-biotinyl-L-lysyl-[protein] + malonyl-CoA. It participates in lipid metabolism; malonyl-CoA biosynthesis; malonyl-CoA from acetyl-CoA: step 1/1. Component of the acetyl coenzyme A carboxylase (ACC) complex. Biotin carboxylase (BC) catalyzes the carboxylation of biotin on its carrier protein (BCCP) and then the CO(2) group is transferred by the transcarboxylase to acetyl-CoA to form malonyl-CoA. The protein is Acetyl-coenzyme A carboxylase carboxyl transferase subunit beta of Serratia proteamaculans (strain 568).